A 245-amino-acid polypeptide reads, in one-letter code: 1-(5-phosphoribosyl)-5-[(5-phosphoribosylamino)methylideneamino] imidazole-4-carboxamide isomerase (245 aa).

Asp7 serves as the catalytic Proton acceptor. Asp129 acts as the Proton donor in catalysis.

Belongs to the HisA/HisF family.

The protein localises to the cytoplasm. The enzyme catalyses 1-(5-phospho-beta-D-ribosyl)-5-[(5-phospho-beta-D-ribosylamino)methylideneamino]imidazole-4-carboxamide = 5-[(5-phospho-1-deoxy-D-ribulos-1-ylimino)methylamino]-1-(5-phospho-beta-D-ribosyl)imidazole-4-carboxamide. It functions in the pathway amino-acid biosynthesis; L-histidine biosynthesis; L-histidine from 5-phospho-alpha-D-ribose 1-diphosphate: step 4/9. The sequence is that of 1-(5-phosphoribosyl)-5-[(5-phosphoribosylamino)methylideneamino] imidazole-4-carboxamide isomerase from Escherichia coli O127:H6 (strain E2348/69 / EPEC).